The following is a 372-amino-acid chain: Aminomethyltransferase (372 aa).

Belongs to the GcvT family. As to quaternary structure, the glycine cleavage system is composed of four proteins: P, T, L and H.

It carries out the reaction N(6)-[(R)-S(8)-aminomethyldihydrolipoyl]-L-lysyl-[protein] + (6S)-5,6,7,8-tetrahydrofolate = N(6)-[(R)-dihydrolipoyl]-L-lysyl-[protein] + (6R)-5,10-methylene-5,6,7,8-tetrahydrofolate + NH4(+). In terms of biological role, the glycine cleavage system catalyzes the degradation of glycine. The chain is Aminomethyltransferase from Prochlorococcus marinus (strain NATL2A).